Here is a 275-residue protein sequence, read N- to C-terminus: Intercellular adhesion molecule 2 (275 aa).

An N-terminal signal peptide occupies residues 1–24 (MSSFSYRTLTVALFALICCPGSDE). Residues 25-223 (KVFEVHVRPK…EIYEPVSDSQ (199 aa)) lie on the Extracellular side of the membrane. One can recognise an Ig-like C2-type 1 domain in the interval 41–98 (KGSLKVNCSTTCNQPEVGGLETSLDKILLDEQAQWKHYLVSNISHDTVLQCHFTCSGK). N-linked (GlcNAc...) asparagine glycans are attached at residues asparagine 47, asparagine 82, asparagine 105, asparagine 153, asparagine 176, and asparagine 187. 2 disulfide bridges follow: cysteine 48–cysteine 91 and cysteine 52–cysteine 95. The Ig-like C2-type 2 domain occupies 127–197 (GKSFTIECRV…FSCLAVLDLM (71 aa)). A disulfide bridge links cysteine 134 with cysteine 190. Residues 224 to 248 (MVIIVTVVSVLLSLFVTSVLLCFIF) traverse the membrane as a helical segment. At 249–275 (GQHLRQQRMGTYGVRAAWRRLPQAFRP) the chain is on the cytoplasmic side. Residues 251-275 (HLRQQRMGTYGVRAAWRRLPQAFRP) are required for interaction with EZR, MSN and RDX and co-localization to microvilli.

Belongs to the immunoglobulin superfamily. ICAM family. As to quaternary structure, interacts with RDX, EZR and MSN.

The protein resides in the membrane. It localises to the cell projection. It is found in the microvillus. ICAM proteins are ligands for the leukocyte adhesion protein LFA-1 (integrin alpha-L/beta-2). ICAM2 may play a role in lymphocyte recirculation by blocking LFA-1-dependent cell adhesion. It mediates adhesive interactions important for antigen-specific immune response, NK-cell mediated clearance, lymphocyte recirculation, and other cellular interactions important for immune response and surveillance. The sequence is that of Intercellular adhesion molecule 2 (ICAM2) from Pan troglodytes (Chimpanzee).